A 258-amino-acid chain; its full sequence is Imidazole glycerol phosphate synthase subunit HisF (258 aa).

Active-site residues include Asp12 and Asp131.

The protein belongs to the HisA/HisF family. As to quaternary structure, heterodimer of HisH and HisF.

It is found in the cytoplasm. It carries out the reaction 5-[(5-phospho-1-deoxy-D-ribulos-1-ylimino)methylamino]-1-(5-phospho-beta-D-ribosyl)imidazole-4-carboxamide + L-glutamine = D-erythro-1-(imidazol-4-yl)glycerol 3-phosphate + 5-amino-1-(5-phospho-beta-D-ribosyl)imidazole-4-carboxamide + L-glutamate + H(+). Its pathway is amino-acid biosynthesis; L-histidine biosynthesis; L-histidine from 5-phospho-alpha-D-ribose 1-diphosphate: step 5/9. IGPS catalyzes the conversion of PRFAR and glutamine to IGP, AICAR and glutamate. The HisF subunit catalyzes the cyclization activity that produces IGP and AICAR from PRFAR using the ammonia provided by the HisH subunit. In Corynebacterium diphtheriae (strain ATCC 700971 / NCTC 13129 / Biotype gravis), this protein is Imidazole glycerol phosphate synthase subunit HisF.